Here is a 783-residue protein sequence, read N- to C-terminus: RNA exonuclease 5 (783 aa).

The region spanning 230–378 (LFGLDCEMCL…EDARTTLELA (149 aa)) is the Exonuclease domain. RRM domains follow at residues 503 to 577 (STVY…RPVT) and 598 to 677 (GTIY…RHLH).

The protein is RNA exonuclease 5 (REXO5) of Bos taurus (Bovine).